A 745-amino-acid polypeptide reads, in one-letter code: Copper-transporting ATPase (745 aa).

Residues M1 to K67 enclose the HMA domain. Residues M1 to K83 lie on the Cytoplasmic side of the membrane. The Cu cation site is built by C12 and C15. Residues L84–S104 traverse the membrane as a helical segment. Residues P105 to A124 are Extracellular-facing. The chain crosses the membrane as a helical span at residues C125–Q144. At G145 to H151 the chain is on the cytoplasmic side. A helical membrane pass occupies residues R152 to L172. Over W173 to F194 the chain is Extracellular. A helical membrane pass occupies residues E195–K215. Over D216 to K343 the chain is Cytoplasmic. The chain crosses the membrane as a helical span at residues V344–I366. At A367 to A379 the chain is on the extracellular side. The chain crosses the membrane as a helical span at residues L380–L397. The Cytoplasmic portion of the chain corresponds to A398–I685. D435 acts as the 4-aspartylphosphate intermediate in catalysis. 2 residues coordinate Mg(2+): D631 and D635. The helical transmembrane segment at K686–G705 threads the bilayer. Topologically, residues V706–P716 are extracellular. The helical transmembrane segment at A717–Q735 threads the bilayer. Topologically, residues R736–H745 are cytoplasmic.

This sequence belongs to the cation transport ATPase (P-type) (TC 3.A.3) family. Type IB subfamily.

The protein localises to the cell membrane. The enzyme catalyses Cu(2+)(in) + ATP + H2O = Cu(2+)(out) + ADP + phosphate + H(+). In terms of biological role, probably involved in copper export. The protein is Copper-transporting ATPase (copA) of Helicobacter pylori (Campylobacter pylori).